A 910-amino-acid polypeptide reads, in one-letter code: Protein translocase subunit SecA (910 aa).

ATP contacts are provided by residues Gln-89, 107-111, and Asp-502; that span reads GEGKT. Zn(2+)-binding residues include Cys-889, Cys-891, Cys-900, and His-901.

Belongs to the SecA family. In terms of assembly, monomer and homodimer. Part of the essential Sec protein translocation apparatus which comprises SecA, SecYEG and auxiliary proteins SecDF-YajC and YidC. It depends on Zn(2+) as a cofactor.

The protein localises to the cell inner membrane. It is found in the cytoplasm. It catalyses the reaction ATP + H2O + cellular proteinSide 1 = ADP + phosphate + cellular proteinSide 2.. Its function is as follows. Part of the Sec protein translocase complex. Interacts with the SecYEG preprotein conducting channel. Has a central role in coupling the hydrolysis of ATP to the transfer of proteins into and across the cell membrane, serving both as a receptor for the preprotein-SecB complex and as an ATP-driven molecular motor driving the stepwise translocation of polypeptide chains across the membrane. This is Protein translocase subunit SecA from Bartonella bacilliformis (strain ATCC 35685 / KC583 / Herrer 020/F12,63).